The chain runs to 563 residues: Beta-catenin-like protein 1 (563 aa).

Position 1 is an N-acetylmethionine (methionine 1). Positions 1 to 81 (MDVGELLSYQ…EEEEPLDESS (81 aa)) are disordered. The Nuclear localization signal signature appears at 16 to 33 (KRPRDDEEEELKTRRKQT). The segment covering 34 to 45 (GPRERGRYREEE) has biased composition (basic and acidic residues). Residues 66–78 (DGEEEEEEEEPLD) show a composition bias toward acidic residues. HEAT repeat units follow at residues 79 to 129 (ESSV…VVAT) and 134 to 176 (YHLL…TLHE). Lysine 91 is modified (N6-acetyllysine). Residues 130-140 (MPDLYHLLVEL) carry the Nuclear export signal (NES) motif. 5 ARM repeats span residues 178–228 (EEGA…MAEF), 229–273 (RPEM…LQDN), 274–323 (DENR…CLML), 325–363 (SNRE…AMIG), and 364–417 (PEGT…LLRN). A Phosphoserine modification is found at serine 389. Residues 476 to 540 (DMEDEFYLRR…HIIKEYAENI (65 aa)) adopt a coiled-coil conformation. Phosphoserine is present on serine 545.

As to quaternary structure, component of the PRP19-CDC5L splicing complex composed of a core complex comprising a homotetramer of PRPF19, CDC5L, PLRG1 and BCAS2, and at least three less stably associated proteins CTNNBL1, CWC15 and HSPA8. Interacts directly with CWC15 and CDC5L in the complex. Interacts with AICDA; the interaction is important for the antibody diversification activity of AICDA. Interacts with PRPF31 (via its NLS). Interacts (via its N-terminal NLS) with KPNA1 and KPNA2.

The protein resides in the nucleus. In terms of biological role, component of the PRP19-CDC5L complex that forms an integral part of the spliceosome and is required for activating pre-mRNA splicing. Participates in AID/AICDA-mediated somatic hypermutation (SHM) and class-switch recombination (CSR), 2 processes resulting in the production of high-affinity, mutated isotype-switched antibodies. The chain is Beta-catenin-like protein 1 (Ctnnbl1) from Mus musculus (Mouse).